A 205-amino-acid chain; its full sequence is Large ribosomal subunit protein bL25 (205 aa).

This sequence belongs to the bacterial ribosomal protein bL25 family. CTC subfamily. As to quaternary structure, part of the 50S ribosomal subunit; part of the 5S rRNA/L5/L18/L25 subcomplex. Contacts the 5S rRNA. Binds to the 5S rRNA independently of L5 and L18.

In terms of biological role, this is one of the proteins that binds to the 5S RNA in the ribosome where it forms part of the central protuberance. The protein is Large ribosomal subunit protein bL25 of Bartonella bacilliformis (strain ATCC 35685 / KC583 / Herrer 020/F12,63).